Consider the following 238-residue polypeptide: Ribonuclease HII (238 aa).

In terms of domain architecture, RNase H type-2 spans 12–197 (GIVAGVDEAG…VLELLTDDLL (186 aa)). Residues D18, E19, and D107 each contribute to the a divalent metal cation site.

It belongs to the RNase HII family. Mn(2+) serves as cofactor. The cofactor is Mg(2+).

The protein localises to the cytoplasm. It catalyses the reaction Endonucleolytic cleavage to 5'-phosphomonoester.. Endonuclease that specifically degrades the RNA of RNA-DNA hybrids. The sequence is that of Ribonuclease HII from Thermotoga petrophila (strain ATCC BAA-488 / DSM 13995 / JCM 10881 / RKU-1).